The sequence spans 309 residues: MKQMNKLITGVVTLATVVTLSACQSSHNNTKLVSMKGDTITVSDFYNETKNTELAQKAMLSLVISRVFETQYANKVSDKEVEKAYKQTADQYGTSFKTVLAQSGLTPETYKKQIRLTKLVEYAVKEQAKNETISKKDYRQAYDAYTPTMTAEIMQFEKEEDAKAALEAVKAEGADFAAIAKEKTTAADKKTTYTFDSGETTLPAEVVRAASGLKEGNRSEIITALDPATSKRTYHIIKVTKKATKKADWKAYQKRLKDIIVTGKLKDPDFQNKVIAKALDKANVKIKDKAFANILAQFAKPNQKQPAQK.

The signal sequence occupies residues 1–22; it reads MKQMNKLITGVVTLATVVTLSA. C23 carries the N-palmitoyl cysteine lipid modification. The S-diacylglycerol cysteine moiety is linked to residue C23. The PpiC domain occupies 146–241; sequence TPTMTAEIMQ…RTYHIIKVTK (96 aa).

It belongs to the PrsA family.

The protein localises to the cell membrane. The catalysed reaction is [protein]-peptidylproline (omega=180) = [protein]-peptidylproline (omega=0). In terms of biological role, plays a major role in protein secretion by helping the post-translocational extracellular folding of several secreted proteins. The chain is Foldase protein PrsA 2 (prsA2) from Streptococcus pyogenes serotype M1.